The chain runs to 70 residues: Putative membrane protein insertion efficiency factor (70 aa).

The protein belongs to the UPF0161 family.

It is found in the cell membrane. Functionally, could be involved in insertion of integral membrane proteins into the membrane. The polypeptide is Putative membrane protein insertion efficiency factor (Chloroflexus aurantiacus (strain ATCC 29366 / DSM 635 / J-10-fl)).